The following is an 80-amino-acid chain: Large ribosomal subunit protein uL24 (80 aa).

The protein belongs to the universal ribosomal protein uL24 family. Part of the 50S ribosomal subunit.

One of two assembly initiator proteins, it binds directly to the 5'-end of the 23S rRNA, where it nucleates assembly of the 50S subunit. In terms of biological role, one of the proteins that surrounds the polypeptide exit tunnel on the outside of the subunit. The protein is Large ribosomal subunit protein uL24 of Chlorobium phaeobacteroides (strain DSM 266 / SMG 266 / 2430).